We begin with the raw amino-acid sequence, 250 residues long: tRNA (guanine-N(1)-)-methyltransferase (250 aa).

Residues Gly-115 and 135–140 (LGDFVL) each bind S-adenosyl-L-methionine.

It belongs to the RNA methyltransferase TrmD family. In terms of assembly, homodimer.

The protein localises to the cytoplasm. The enzyme catalyses guanosine(37) in tRNA + S-adenosyl-L-methionine = N(1)-methylguanosine(37) in tRNA + S-adenosyl-L-homocysteine + H(+). In terms of biological role, specifically methylates guanosine-37 in various tRNAs. The sequence is that of tRNA (guanine-N(1)-)-methyltransferase from Legionella pneumophila subsp. pneumophila (strain Philadelphia 1 / ATCC 33152 / DSM 7513).